Consider the following 93-residue polypeptide: N-myc protein (93 aa).

Efficient DNA binding requires dimerization with another bHLH protein. Binds DNA as a heterodimer with MAX. Barely detectable in most tissues assayed.

It localises to the nucleus. Its function is as follows. May function as a transcription factor. The sequence is that of N-myc protein (mycn) from Danio rerio (Zebrafish).